The sequence spans 414 residues: DNA polymerase IV 1 (414 aa).

The region spanning 8–189 (IFHIDMNSFY…LPVGEMHGVG (182 aa)) is the UmuC domain. Mg(2+)-binding residues include D12 and D108. E109 is an active-site residue. The disordered stretch occupies residues 391–414 (LKKEESKTKGTSFNKDFFQDEKKS).

The protein belongs to the DNA polymerase type-Y family. Monomer. Mg(2+) is required as a cofactor.

Its subcellular location is the cytoplasm. The enzyme catalyses DNA(n) + a 2'-deoxyribonucleoside 5'-triphosphate = DNA(n+1) + diphosphate. In terms of biological role, poorly processive, error-prone DNA polymerase involved in untargeted mutagenesis. Copies undamaged DNA at stalled replication forks, which arise in vivo from mismatched or misaligned primer ends. These misaligned primers can be extended by PolIV. Exhibits no 3'-5' exonuclease (proofreading) activity. May be involved in translesion synthesis (TSL), in conjunction with the beta clamp from PolIII. This Bacillus subtilis (strain 168) protein is DNA polymerase IV 1 (dinB1).